Here is a 345-residue protein sequence, read N- to C-terminus: MKNDLFLRVLRGEKVERTPVWIMRQAGRYLAEYRKLRAKVPHFLDVCRNPELACELALQPLQRFPLDAAILFSDILTIPDAMGLGLSFVAGEGPQFAKPLRSSAAIESLTLPPSGSLDYVFAAVSATKRALNDRVPLIGFAGSPWTLAAYMIEGGASKDFAFAKSFAFSQPQAMDVLLTQLTCAITDYLRGQIKAGAQAVMIFDSWGGVLPYWAYEQFSLPYLKKIVAAVHTVAPVIVFTKGGGLWLAAQKTIGAAALGVDWTVSLAAARKIVGESIVLQGNLDPTFLMTDPKTIRQAVAKTLADYGNGHRYIFNLGHGITPNASPDNVAAMIEAVHELSPQYHQ.

Substrate is bound by residues 24–28 (RQAGR), Asp-74, Tyr-150, Ser-205, and His-318.

This sequence belongs to the uroporphyrinogen decarboxylase family. As to quaternary structure, homodimer.

Its subcellular location is the cytoplasm. It catalyses the reaction uroporphyrinogen III + 4 H(+) = coproporphyrinogen III + 4 CO2. Its pathway is porphyrin-containing compound metabolism; protoporphyrin-IX biosynthesis; coproporphyrinogen-III from 5-aminolevulinate: step 4/4. In terms of biological role, catalyzes the decarboxylation of four acetate groups of uroporphyrinogen-III to yield coproporphyrinogen-III. The protein is Uroporphyrinogen decarboxylase of Dichelobacter nodosus (strain VCS1703A).